A 319-amino-acid polypeptide reads, in one-letter code: Biotin synthase (319 aa).

In terms of domain architecture, Radical SAM core spans 44–273; it reads IHGDGIDLCS…EAKIRLAGGR (230 aa). The [4Fe-4S] cluster site is built by C62, C66, and C69. [2Fe-2S] cluster is bound by residues S106, C138, C198, and R268.

The protein belongs to the radical SAM superfamily. Biotin synthase family. In terms of assembly, homodimer. [4Fe-4S] cluster serves as cofactor. Requires [2Fe-2S] cluster as cofactor.

It catalyses the reaction (4R,5S)-dethiobiotin + (sulfur carrier)-SH + 2 reduced [2Fe-2S]-[ferredoxin] + 2 S-adenosyl-L-methionine = (sulfur carrier)-H + biotin + 2 5'-deoxyadenosine + 2 L-methionine + 2 oxidized [2Fe-2S]-[ferredoxin]. It participates in cofactor biosynthesis; biotin biosynthesis; biotin from 7,8-diaminononanoate: step 2/2. Its function is as follows. Catalyzes the conversion of dethiobiotin (DTB) to biotin by the insertion of a sulfur atom into dethiobiotin via a radical-based mechanism. The polypeptide is Biotin synthase (Clostridium perfringens (strain ATCC 13124 / DSM 756 / JCM 1290 / NCIMB 6125 / NCTC 8237 / Type A)).